The chain runs to 396 residues: Gap junction gamma-1 protein (396 aa).

The Cytoplasmic segment spans residues 1-22; sequence MSWSFLTRLLEEIHNHSTFVGK. Residues 23-45 traverse the membrane as a helical segment; it reads IWLTVLIVFRIVLTAVGGESIYY. At 46–75 the chain is on the extracellular side; the sequence is DEQSKFVCNTEQPGCENVCYDAFAPLSHVR. The helical transmembrane segment at 76–95 threads the bilayer; sequence FWVFQIILVATPSVMYLGYA. Residues 96 to 175 are Cytoplasmic-facing; it reads IHKIAKMEHG…RRIREDGLMK (80 aa). The segment at 145 to 165 is disordered; it reads ELESEKENKEQNQSKPKHDGR. The span at 147–156 shows a compositional bias: basic and acidic residues; sequence ESEKENKEQN. A helical membrane pass occupies residues 176–198; sequence IYVLQLLARTMFEVGFLIGQYFL. Topologically, residues 199–228 are extracellular; sequence YGFQVHPFYVCSRVPCPHKIDCFISRPTEK. A helical transmembrane segment spans residues 229–248; that stretch reads TIFLLIMYGVTGLCLLLNIW. The Cytoplasmic portion of the chain corresponds to 249 to 396; that stretch reads EMLHLGFGTI…SGDGKTSVWI (148 aa). A disordered region spans residues 357–396; that stretch reads NHQNNPHGPREKKAKVGSKAGSNKSSASSKSGDGKTSVWI. A compositionally biased stretch (low complexity) spans 373 to 396; it reads GSKAGSNKSSASSKSGDGKTSVWI.

It belongs to the connexin family. Gamma-type subfamily. As to quaternary structure, a connexon is composed of a hexamer of connexins. Interacts with CNST.

The protein localises to the cell membrane. It localises to the cell junction. The protein resides in the gap junction. One gap junction consists of a cluster of closely packed pairs of transmembrane channels, the connexons, through which materials of low MW diffuse from one cell to a neighboring cell. The polypeptide is Gap junction gamma-1 protein (GJC1) (Sus scrofa (Pig)).